Consider the following 87-residue polypeptide: U3-theraphotoxin-Hhn1l (87 aa).

A signal peptide spans 1 to 24 (MVNMKASMFLTFAGLVLLFVVCYA). Residues 25-52 (SESEEKEFPKEMLSSIFAVDNDFKQEER) constitute a propeptide that is removed on maturation. 3 cysteine pairs are disulfide-bonded: C54–C67, C61–C72, and C66–C79.

This sequence belongs to the neurotoxin 10 (Hwtx-1) family. 51 (Hntx-8) subfamily. Hntx-8 sub-subfamily. As to expression, expressed by the venom gland.

The protein resides in the secreted. Ion channel inhibitor. This chain is U3-theraphotoxin-Hhn1l, found in Cyriopagopus hainanus (Chinese bird spider).